Consider the following 158-residue polypeptide: uncharacterized protein (158 aa).

A helical transmembrane segment spans residues 33 to 53 (VLAAVPQLGAAKVLVLLLLGV).

Its subcellular location is the membrane. This is an uncharacterized protein from Saccharomyces cerevisiae (strain ATCC 204508 / S288c) (Baker's yeast).